We begin with the raw amino-acid sequence, 127 residues long: MNTPFNDGSGQTDPMTDIPTPLIFTDNAANKVRELIEEEGNNDLKLRVFVAGGGCSGFKYGFTFDELISEDDTVMEKNGVKLLVDAMSFQYLAGAEIDYQENAEGAQFIIKNPGAASTCGCGSSFSV.

Polar residues predominate over residues 1-14 (MNTPFNDGSGQTDP). Residues 1-20 (MNTPFNDGSGQTDPMTDIPT) form a disordered region. Iron-sulfur cluster contacts are provided by Cys-55, Cys-119, and Cys-121.

The protein belongs to the HesB/IscA family. In terms of assembly, homodimer. Iron-sulfur cluster is required as a cofactor.

Functionally, required for insertion of 4Fe-4S clusters. The polypeptide is Putative iron-sulfur cluster insertion protein ErpA (Nitrosospira multiformis (strain ATCC 25196 / NCIMB 11849 / C 71)).